Reading from the N-terminus, the 2664-residue chain is Inositol 1,4,5-trisphosphate-gated calcium channel ITPR3 (2664 aa).

Residues 1–2227 (MSEMSSFLHI…YVEGASTGVL (2227 aa)) lie on the Cytoplasmic side of the membrane. 5 consecutive MIR domains span residues 113-173 (GDVV…LRSN), 174-224 (GDNV…INLF), 232-288 (EEVL…VEVV), 295-372 (GGAG…LDPT), and 378-434 (DSFV…IVSV). 1D-myo-inositol 1,4,5-trisphosphate-binding residues include arginine 266, threonine 268, leucine 269, and arginine 270. The tract at residues 320 to 344 (NPSYKGDASDPKAAGTGAQGRTGRR) is disordered. The 1D-myo-inositol 1,4,5-trisphosphate site is built by arginine 503, lysine 507, arginine 510, tyrosine 567, arginine 568, and lysine 569. Position 743 (arginine 743) interacts with Ca(2+). Residues serine 909 and serine 927 each carry the phosphoserine modification. Ca(2+)-binding residues include glutamate 1115 and glutamate 1118. Disordered stretches follow at residues 1124–1158 (KGAS…GEKS) and 1790–1850 (QQET…VGER). The span at 1792 to 1805 (ETKSTVAVNMSDLG) shows a compositional bias: polar residues. 3 positions are modified to phosphoserine: serine 1806, serine 1825, and serine 1827. Residues glutamate 1875 and glutamate 1939 each coordinate Ca(2+). Positions 1989, 2142, and 2145 each coordinate ATP. Residues 2228–2248 (GSPLISLLFWILICFSIAALF) traverse the membrane as a helical segment. Over 2249–2256 (TKRYSVRP) the chain is Extracellular. The helical transmembrane segment at 2257–2277 (LIVALILRSIYYLGIGPTLNI) threads the bilayer. The Cytoplasmic segment spans residues 2278 to 2286 (LGALNLTNK). The helical transmembrane segment at 2287 to 2304 (IVFVVSFVGNRGTFIRGY) threads the bilayer. At 2305–2318 (KAMVMDMEFLYHVG) the chain is on the extracellular side. Residues 2319-2339 (YILTSVLGLFAHELFYSILLF) traverse the membrane as a helical segment. The Cytoplasmic portion of the chain corresponds to 2340-2361 (DLIYREETLFNVIKSVTRNGRS). A helical membrane pass occupies residues 2362–2382 (ILLTALLALILVYLFSIVGFL). Residues 2383-2489 (FLKDDFILEV…ESLFPARVVY (107 aa)) are Extracellular-facing. Cysteine 2448 and cysteine 2454 form a disulfide bridge. Residues 2490 to 2510 (DLLFFFIVIIIVLNLIFGVII) form a helical membrane-spanning segment. Residues 2511 to 2664 (DTFADLRSEK…FVDVQNCMSR (154 aa)) lie on the Cytoplasmic side of the membrane. 2 residues coordinate ATP: cysteine 2531 and phenylalanine 2532. Cysteine 2531 provides a ligand contact to Zn(2+). Zn(2+) contacts are provided by cysteine 2534 and histidine 2551. Residues lysine 2553, histidine 2556, asparagine 2557, and methionine 2558 each coordinate ATP. Histidine 2556 contributes to the Zn(2+) binding site. Residue threonine 2574 participates in Ca(2+) binding. Phosphoserine occurs at positions 2602 and 2663.

This sequence belongs to the InsP3 receptor family. As to quaternary structure, homotetramer. Homodimer. Interacts with TRPC1, TRPC3 and TRPC4. Interacts with TRPV4. Interacts with SIGMAR1. Interacts with PML and AKT1. Interacts with IRAG2 (via coiled-coil domain). Interacts with CABP1. Interacts with TMBIM4/LFG4. Interacts with CEMIP. Interacts with TESPA1. Interacts with TMEM203. Interacts with BOK; regulates ITPR3 expression. Interacts with BCL2L10. Interacts with CHGA and CHGB. Post-translationally, phosphorylated by AKT1 on serine and/or threonine residues.

It localises to the endoplasmic reticulum membrane. It is found in the cytoplasmic vesicle. Its subcellular location is the secretory vesicle membrane. It catalyses the reaction Ca(2+)(in) = Ca(2+)(out). Its activity is regulated as follows. Inositol 1,4,5-trisphosphate-gated calcium channel is regulated by cytosolic calcium in a biphasic manner. At low concentrations, cytosolic calcium binds at a high-affinity juxtamembrane domain (JD) calcium binding site, allowing ITPR3 to activate by escaping a low-energy resting state through an ensemble of preactivated states. At high cytosolic calcium concentrations, ITPR3 preferentially enters an inhibited state stabilized by calcium binding at a second, low-affinity cytoplasmic domain (CD) calcium binding site. In terms of biological role, inositol 1,4,5-trisphosphate-gated calcium channel that, upon 1D-myo-inositol 1,4,5-trisphosphate binding, transports calcium from the endoplasmic reticulum lumen to cytoplasm, thus releasing the intracellular calcium and therefore participates in cellular calcium ion homeostasis. 1D-myo-inositol 1,4,5-trisphosphate binds to the ligand-free channel without altering its global conformation, yielding the low-energy resting state, then progresses through resting-to preactivated transitions to the higher energy preactivated state, which increases affinity for calcium, promoting binding of the low basal cytosolic calcium at the juxtamembrane domain (JD) site, favoring the transition through the ensemble of high-energy intermediate states along the trajectory to the fully-open activated state. Upon opening, releases calcium in the cytosol where it can bind to the low-affinity cytoplasmic domain (CD) site and stabilizes the inhibited state to terminate calcium release. In Bos taurus (Bovine), this protein is Inositol 1,4,5-trisphosphate-gated calcium channel ITPR3.